The sequence spans 541 residues: MFQDKGWILVTLITLVTPSWAAYKLQERYSWSQLDFAFPNTRLKDQALASGDYIPQNALPVGVEHFGNRLFVTVPRWRDGIPATLTYINMDRSLTGSPELIPYPDWRSNTAGDCANSITTAYRIKVDECGRLWVLDTGTVGIGNTTTNPCPYAVNVFDLTTDTRIRRYELPGVDTNPNTFIANIAVDIGKNCDDAYAYFADELGYGLIAYSWELNKSWRFSAHSYFFPDPLRGDFNVAGINFQWGEEGIFGMSLSPIRSDGYRTLYFSPLASHRQFAVSTRILRDETRTEDSYHDFVALDERGPNSHTTSRVMSDDGIELFNLIDQNAVGCWHSSMPYSPQFHGIVDRDDVGLVFPADVKIDENKNVWVLSDRMPVFLLSDLDYSDTNFRIYTAPLATLIENTVCDLRNNAYGPPNTVSIPKQAVLPMGPPLYTKQYRPVLPQKPQTSWASSPPPPSRTYLPANSGNVVSSISVSTNSVGPAGVEVPKAYIFNQHNGINYETSGPHLFPTHQPAQPGGQDGGLKTYVNARQSGWWHHQHQG.

The N-terminal stretch at 1 to 21 is a signal peptide; that stretch reads MFQDKGWILVTLITLVTPSWA. Asn-144 and Asn-215 each carry an N-linked (GlcNAc...) asparagine glycan. Residues 443 to 463 form a disordered region; sequence QKPQTSWASSPPPPSRTYLPA.

The protein belongs to the major royal jelly protein family.

The protein localises to the secreted. In terms of biological role, controls the pigmentation pattern of the adult cuticle and larval mouth parts. This Drosophila melanogaster (Fruit fly) protein is Protein yellow (y).